Here is a 752-residue protein sequence, read N- to C-terminus: Glutamate carboxypeptidase 2 (752 aa).

Topologically, residues Met1 to Arg22 are cytoplasmic. Ser10 carries the phosphoserine modification. Residues Val23 to Ile44 form a helical; Signal-anchor for type II membrane protein membrane-spanning segment. Residues Lys45–Ala752 lie on the Extracellular side of the membrane. Residues Asn78, Asn123, and Asn155 are each glycosylated (N-linked (GlcNAc...) asparagine). Residues Arg212 and Asn259 each coordinate substrate. Thr271 and Tyr274 together coordinate Ca(2+). The NAALADase stretch occupies residues Ala276–Leu589. The N-linked (GlcNAc...) asparagine glycan is linked to Asn338. Residues His379 and Asp389 each coordinate Zn(2+). Glu426 lines the substrate pocket. The active-site Nucleophile; for NAALADase activity is the Glu426. Glu427 lines the Zn(2+) pocket. Residues Glu435 and Glu438 each contribute to the Ca(2+) site. A Zn(2+)-binding site is contributed by Asp455. Residues Asn461 and Asn478 are each glycosylated (N-linked (GlcNAc...) asparagine). Substrate is bound by residues Ser519 to Gly520, Asn521, Arg536 to Arg538, Tyr554, and Tyr554 to His555. Zn(2+) is bound at residue His555. N-linked (GlcNAc...) asparagine glycosylation is present at Asn615. Ser630 acts as the Charge relay system in catalysis. Asn640 carries N-linked (GlcNAc...) asparagine glycosylation. Active-site charge relay system residues include Asp668 and His691. Substrate is bound at residue Lys701–Tyr702. N-linked (GlcNAc...) asparagine glycosylation occurs at Asn722.

This sequence belongs to the peptidase M28 family. M28B subfamily. As to quaternary structure, homodimer. Zn(2+) serves as cofactor. As to expression, expressed predominantly in the hippocampal region of the brain and in kidney. Lower levels in the ovary, testis and mandibular gland.

It localises to the cell membrane. The enzyme catalyses Release of an unsubstituted, C-terminal glutamyl residue, typically from Ac-Asp-Glu or folylpoly-gamma-glutamates.. With respect to regulation, the NAALADase and folate hydrolase activities are inhibited by quisqualic acid. In terms of biological role, has both folate hydrolase and N-acetylated-alpha-linked-acidic dipeptidase (NAALADase) activity. Has a preference for tri-alpha-glutamate peptides. In the intestine, required for the uptake of folate. In the brain, modulates excitatory neurotransmission through the hydrolysis of the neuropeptide, N-aceylaspartylglutamate (NAAG), thereby releasing glutamate. Its function is as follows. Also exhibits a dipeptidyl-peptidase IV type activity. In vitro, cleaves Gly-Pro-AMC. This chain is Glutamate carboxypeptidase 2 (Folh1), found in Mus musculus (Mouse).